Reading from the N-terminus, the 833-residue chain is Transcription factor MBP1 (833 aa).

The HTH APSES-type domain maps to 5 to 111 (IYSARYSGVD…FTQTDGSASP (107 aa)). A DNA-binding region (H-T-H motif) is located at residues 36–57 (ATHILKAANFAKAKRTRILEKE). Disordered stretches follow at residues 104-223 (QTDG…QSPT) and 280-329 (QQSS…SPII). Residue S110 is modified to Phosphoserine. Over residues 115–129 (PKHHHASKVDRKKAI) the composition is skewed to basic residues. Positions 139–149 (ETKRNNKKAEE) are enriched in basic and acidic residues. Polar residues predominate over residues 201–223 (PNSSISTTQLPSIRSTMGPQSPT). Over residues 280–307 (QQSSLIQTQQTESMATSVSSSPSLPTSP) the composition is skewed to low complexity. T325 is subject to Phosphothreonine. Phosphoserine occurs at positions 326 and 330. 2 ANK repeats span residues 394 to 423 (ELHT…SIRS) and 512 to 541 (NGDT…LTTI). A Phosphoserine modification is found at S827.

In terms of assembly, component of the transcription complex MCB-binding factor (MBF) composed of SWI6 and MBP1. Interacts with MSA1.

It is found in the nucleus. Binds to MCB elements (Mlu I cell cycle box) found in the promoter of most DNA synthesis genes. Transcriptional activation by MBF has an important role in the transition from G1 to S phase. It may have a dual role in that it behaves as an activator of transcription at the G1-S boundary and as a repressor during other stages of the cell cycle. This Saccharomyces cerevisiae (strain ATCC 204508 / S288c) (Baker's yeast) protein is Transcription factor MBP1 (MBP1).